Here is a 955-residue protein sequence, read N- to C-terminus: Glycine dehydrogenase (decarboxylating) (955 aa).

Position 702 is an N6-(pyridoxal phosphate)lysine (Lys702).

It belongs to the GcvP family. The glycine cleavage system is composed of four proteins: P, T, L and H. The cofactor is pyridoxal 5'-phosphate.

The catalysed reaction is N(6)-[(R)-lipoyl]-L-lysyl-[glycine-cleavage complex H protein] + glycine + H(+) = N(6)-[(R)-S(8)-aminomethyldihydrolipoyl]-L-lysyl-[glycine-cleavage complex H protein] + CO2. Its function is as follows. The glycine cleavage system catalyzes the degradation of glycine. The P protein binds the alpha-amino group of glycine through its pyridoxal phosphate cofactor; CO(2) is released and the remaining methylamine moiety is then transferred to the lipoamide cofactor of the H protein. The protein is Glycine dehydrogenase (decarboxylating) of Bradyrhizobium diazoefficiens (strain JCM 10833 / BCRC 13528 / IAM 13628 / NBRC 14792 / USDA 110).